The sequence spans 139 residues: Small ribosomal subunit protein bS16 (139 aa).

A disordered region spans residues 84–139 (KGEPAPAPLLQPAEKAARPSFEAIGGEDEGKGEAITQKKKADKKDEAAAESSASEA).

This sequence belongs to the bacterial ribosomal protein bS16 family.

In Streptomyces coelicolor (strain ATCC BAA-471 / A3(2) / M145), this protein is Small ribosomal subunit protein bS16.